Here is a 293-residue protein sequence, read N- to C-terminus: Protease HtpX (293 aa).

A run of 2 helical transmembrane segments spans residues 4 to 24 and 34 to 54; these read IALFLITNLAVMLVFGLVLSL and GLMIMAGLFGFGGAFVSLLMS. Position 139 (His139) interacts with Zn(2+). The active site involves Glu140. His143 serves as a coordination point for Zn(2+). Transmembrane regions (helical) follow at residues 158 to 178 and 193 to 213; these read IVNTFVIFVSRLIAQVVSGFL and LVYFAVATVLELVFGILASII. Glu222 is a Zn(2+) binding site.

It belongs to the peptidase M48B family. Zn(2+) is required as a cofactor.

The protein resides in the cell inner membrane. The sequence is that of Protease HtpX from Pectobacterium carotovorum subsp. carotovorum (strain PC1).